Here is a 215-residue protein sequence, read N- to C-terminus: Adenylate kinase (215 aa).

10-15 (GAGKGT) contributes to the ATP binding site. Residues 30–59 (STGDMFRAAIKEGTELGKQAKALMDQGKLV) are NMP. AMP is bound by residues threonine 31, arginine 36, 57 to 59 (KLV), 85 to 88 (GFPR), and glutamine 92. The LID stretch occupies residues 122-159 (GRRVHQPSGRTYHIIYNPPKVAGQDDITGEELITRADD). Residues arginine 123 and 132-133 (TY) contribute to the ATP site. AMP contacts are provided by arginine 156 and arginine 167. Lysine 200 serves as a coordination point for ATP.

This sequence belongs to the adenylate kinase family. Monomer.

It localises to the cytoplasm. The catalysed reaction is AMP + ATP = 2 ADP. Its pathway is purine metabolism; AMP biosynthesis via salvage pathway; AMP from ADP: step 1/1. Its function is as follows. Catalyzes the reversible transfer of the terminal phosphate group between ATP and AMP. Plays an important role in cellular energy homeostasis and in adenine nucleotide metabolism. The polypeptide is Adenylate kinase (Haemophilus ducreyi (strain 35000HP / ATCC 700724)).